The following is a 317-amino-acid chain: Probable cell division protein WhiA (317 aa).

The segment at residues serine 281–lysine 314 is a DNA-binding region (H-T-H motif).

It belongs to the WhiA family.

In terms of biological role, involved in cell division and chromosome segregation. In Clostridium acetobutylicum (strain ATCC 824 / DSM 792 / JCM 1419 / IAM 19013 / LMG 5710 / NBRC 13948 / NRRL B-527 / VKM B-1787 / 2291 / W), this protein is Probable cell division protein WhiA.